The sequence spans 493 residues: Alpha-amylase-related protein (493 aa).

The first 19 residues, 1-19 (MFKFALTQTLCLAGSLSLA), serve as a signal peptide directing secretion. Gln20 carries the pyrrolidone carboxylic acid modification. Residues Cys47 and Cys103 are joined by a disulfide bond. Ca(2+)-binding residues include Asn117, Gln168, and Asp177. Cysteines 156 and 170 form a disulfide. Arg205 contacts chloride. The active-site Nucleophile is Asp207. His211 is a Ca(2+) binding site. The active-site Proton donor is Glu244. Asn307 and Arg342 together coordinate chloride. Cystine bridges form between Cys375–Cys381, Cys417–Cys440, and Cys447–Cys459.

The protein belongs to the glycosyl hydrolase 13 family. Monomer. Ca(2+) is required as a cofactor. It depends on chloride as a cofactor.

Its subcellular location is the secreted. The enzyme catalyses Endohydrolysis of (1-&gt;4)-alpha-D-glucosidic linkages in polysaccharides containing three or more (1-&gt;4)-alpha-linked D-glucose units.. This Drosophila mauritiana (Fruit fly) protein is Alpha-amylase-related protein (Amyrel).